Here is a 130-residue protein sequence, read N- to C-terminus: Small ribosomal subunit protein uS11 (130 aa).

It belongs to the universal ribosomal protein uS11 family. In terms of assembly, part of the 30S ribosomal subunit. Interacts with proteins S7 and S18. Binds to IF-3.

Functionally, located on the platform of the 30S subunit, it bridges several disparate RNA helices of the 16S rRNA. Forms part of the Shine-Dalgarno cleft in the 70S ribosome. The sequence is that of Small ribosomal subunit protein uS11 from Bdellovibrio bacteriovorus (strain ATCC 15356 / DSM 50701 / NCIMB 9529 / HD100).